A 125-amino-acid chain; its full sequence is uncharacterized protein (125 aa).

Positions 45–110 (IVPVGSKTLL…IGNVPLKILC (66 aa)) constitute a Cupin type-2 domain.

This is an uncharacterized protein from Methanocaldococcus jannaschii (strain ATCC 43067 / DSM 2661 / JAL-1 / JCM 10045 / NBRC 100440) (Methanococcus jannaschii).